The sequence spans 149 residues: Large ribosomal subunit protein bL9 (149 aa).

This sequence belongs to the bacterial ribosomal protein bL9 family.

Binds to the 23S rRNA. The protein is Large ribosomal subunit protein bL9 of Fervidobacterium nodosum (strain ATCC 35602 / DSM 5306 / Rt17-B1).